The sequence spans 332 residues: Glyoxylate reductase (332 aa).

NADP(+) contacts are provided by residues 155 to 158 (MGRI) and 236 to 238 (TSR). Residues R238 and E267 contribute to the active site. H286 (proton donor) is an active-site residue. Residue 286 to 288 (HAA) coordinates NADP(+).

Belongs to the D-isomer specific 2-hydroxyacid dehydrogenase family. GyaR subfamily. Homodimer.

The protein resides in the cytoplasm. It carries out the reaction glycolate + NAD(+) = glyoxylate + NADH + H(+). The sequence is that of Glyoxylate reductase from Korarchaeum cryptofilum (strain OPF8).